Here is a 155-residue protein sequence, read N- to C-terminus: uncharacterized protein (155 aa).

The N-terminal stretch at Met1–Ala30 is a signal peptide.

This is an uncharacterized protein from Treponema pallidum (strain Nichols).